The sequence spans 651 residues: Protein numb homolog (651 aa).

Positions 33-193 (RTGKCSFPVK…ASRTTFTREG (161 aa)) constitute a PID domain. The residue at position 102 (Thr-102) is a Phosphothreonine; by AAK1. Ser-194 is subject to Phosphoserine. The tract at residues 228-255 (SSVAPGNTAPSPSSPTSPTSDATTSLEM) is disordered. Low complexity predominate over residues 235 to 252 (TAPSPSSPTSPTSDATTS). Position 243 is a phosphothreonine (Thr-243). Residue Ser-244 is modified to Phosphoserine. Phosphoserine; by CaMK1 occurs at positions 276 and 295. Disordered stretches follow at residues 419 to 483 (QSSG…SPFQ) and 623 to 651 (LENK…EIEL). Ser-425 is modified (phosphoserine). A Phosphothreonine modification is found at Thr-436. Over residues 436–449 (TPSEADRWLEEVSK) the composition is skewed to basic and acidic residues. Ser-438 carries the phosphoserine modification. The segment covering 453–466 (AQQPQASAAPLQPV) has biased composition (low complexity). A compositionally biased stretch (polar residues) spans 630-644 (RTNPSPTNPFSSDLQ). Ser-634 bears the Phosphoserine mark.

Interacts with SIAH1. Interacts with LNX. Interacts with CDH1. Interacts with TFAP2A and TFAP2B. Interacts with RALBP1 in a complex also containing EPN1 and TFAP2A during interphase and mitosis. Interacts with AAK1. May interact with DUOXA1. Post-translationally, phosphorylated on Ser-276 and Ser-295 by CaMK1. Isoform 1 and isoform 2 are ubiquitinated by LNX leading to their subsequent proteasomal degradation. Ubiquitinated; mediated by SIAH1 and leading to its subsequent proteasomal degradation.

Its subcellular location is the cell membrane. The protein localises to the endosome membrane. Its function is as follows. Regulates clathrin-mediated receptor endocytosis. Plays a role in the process of neurogenesis. Required throughout embryonic neurogenesis to maintain neural progenitor cells, also called radial glial cells (RGCs), by allowing their daughter cells to choose progenitor over neuronal cell fate. Not required for the proliferation of neural progenitor cells before the onset of neurogenesis. Also involved postnatally in the subventricular zone (SVZ) neurogenesis by regulating SVZ neuroblasts survival and ependymal wall integrity. May also mediate local repair of brain ventricular wall damage. The chain is Protein numb homolog from Homo sapiens (Human).